The following is a 500-amino-acid chain: Na(+)/H(+) antiporter NhaB (500 aa).

Transmembrane regions (helical) follow at residues 34 to 54, 58 to 78, 96 to 116, 129 to 149, 150 to 170, 205 to 225, 241 to 261, 311 to 331, 350 to 370, 394 to 414, 450 to 470, and 477 to 497; these read LLLATLGPVVTGWVLVIQFIF, MALKCYPLMPGGLLLVEALLL, VILLLMFMVAGIHFMKELLLF, AVLSLLFCVLSAFLSAFLDAL, TVTAVIISAAVGFYAVYHRVA, LLMHGAVGTALGGVCTLVGEP, FFLKVAPVSMPVLAAGLVTCV, ILIVCLGLHIAEVGLIGLMVI, FQDAMPFTALLVVFFAVVAVI, MLYLANGLLSAISDNVFVATI, ATPNGQAAFLFLLTSAIAPLI, and MVWMALPYTVVMGGLGWWAVT.

This sequence belongs to the NhaB Na(+)/H(+) (TC 2.A.34) antiporter family.

It is found in the cell inner membrane. It catalyses the reaction 2 Na(+)(in) + 3 H(+)(out) = 2 Na(+)(out) + 3 H(+)(in). In terms of biological role, na(+)/H(+) antiporter that extrudes sodium in exchange for external protons. This Pseudomonas entomophila (strain L48) protein is Na(+)/H(+) antiporter NhaB.